Reading from the N-terminus, the 262-residue chain is Flap endonuclease Xni (262 aa).

Residue Asp-105 coordinates Mg(2+). Positions 162–254 (ERSQFLDLMA…LKDFRVIDSL (93 aa)) constitute a 5'-3' exonuclease domain. K(+)-binding residues include Leu-172, Ala-173, Pro-181, Ile-183, and Ile-186. The interaction with DNA stretch occupies residues 185 to 190 (GIGPKS).

It belongs to the Xni family. Mg(2+) serves as cofactor. Requires K(+) as cofactor.

Has flap endonuclease activity. During DNA replication, flap endonucleases cleave the 5'-overhanging flap structure that is generated by displacement synthesis when DNA polymerase encounters the 5'-end of a downstream Okazaki fragment. The polypeptide is Flap endonuclease Xni (Shewanella baltica (strain OS195)).